The primary structure comprises 1105 residues: Pheromone-regulated membrane protein 10 (1105 aa).

Residues M1–S11 show a composition bias toward polar residues. Disordered stretches follow at residues M1–H22, R36–N55, G65–D123, I151–L278, A385–G473, and E520–K656. Over residues N67–N82 the composition is skewed to low complexity. Over residues L85–V106 the composition is skewed to polar residues. Over residues D162 to T178 the composition is skewed to acidic residues. Positions L185–T197 are enriched in polar residues. Acidic residues predominate over residues D198–V210. A compositionally biased stretch (polar residues) spans L390 to H413. Residues E417 to S439 show a composition bias toward low complexity. Residues L446 to E459 show a composition bias toward basic and acidic residues. 3 stretches are compositionally biased toward polar residues: residues E520–L539, R592–E606, and M624–N633. The next 10 membrane-spanning stretches (helical) occupy residues P782 to F802, L809 to I829, S835 to I855, L860 to I880, V903 to I923, A938 to I958, W963 to A983, H986 to G1006, G1015 to S1035, and V1075 to F1095.

Belongs to the ThrE exporter (TC 2.A.79) family.

The protein localises to the membrane. This chain is Pheromone-regulated membrane protein 10 (PRM10), found in Candida albicans (strain SC5314 / ATCC MYA-2876) (Yeast).